Reading from the N-terminus, the 315-residue chain is FAD-linked oxidoreductase sthB (315 aa).

Residues 19 to 201 (QPCSLGNYVS…LSMTSRVHAD (183 aa)) enclose the FAD-binding PCMH-type domain.

This sequence belongs to the oxygen-dependent FAD-linked oxidoreductase family.

The enzyme catalyses betaenone C = betaenone A. It catalyses the reaction stemphyloxin I = stemphyloxin II. Its pathway is mycotoxin biosynthesis. Its function is as follows. FAD-linked oxidoreductase; part of the gene cluster that mediates the biosynthesis of the phytotoxin stemphyloxin II. The first step of the pathway is the synthesis of dehydroprobetaenone I by the polyketide synthase sthA and the enoyl reductase sthE via condensation of one acetyl-CoA starter unit with 7 malonyl-CoA units and 5 methylations. The C-terminal reductase (R) domain of sthA catalyzes the reductive release of the polyketide chain. Because sthA lacks a designated enoylreductase (ER) domain, the required activity is provided the enoyl reductase sthE. The short-chain dehydrogenase/reductase sthC then catalyzes reduction of dehydroprobetaenone I to probetaenone I. The cytochrome P450 monooxygenase sthF catalyzes successive epoxidation, oxidation (resulting from epoxide opening) and hydroxylation to install a tertiary alcohol in the decaline ring to yield betaenone C from dehydroprobetaenone I and betaenone B from probetaenone I. The FAD-linked oxidoreductase sthB is responsible for the conversion of betaenone C to betaenone A via an intramolecular aldol reaction between C-1 and C-17 to form the bridged tricyclic system in betaenone A. Finally, the cytochrome P450 monooxygenase sthD catalyzes the hydroxylation of C-15 to afford the final metabolite stemphyloxin II. The protein is FAD-linked oxidoreductase sthB of Phaeosphaeria nodorum (strain SN15 / ATCC MYA-4574 / FGSC 10173) (Glume blotch fungus).